Consider the following 290-residue polypeptide: Elongation factor Ts, mitochondrial 1 (290 aa).

It belongs to the EF-Ts family.

The protein resides in the mitochondrion. Associates with the EF-Tu.GDP complex and induces the exchange of GDP to GTP. It remains bound to the aminoacyl-tRNA.EF-Tu.GTP complex up to the GTP hydrolysis stage on the ribosome. The polypeptide is Elongation factor Ts, mitochondrial 1 (Postia placenta (strain ATCC 44394 / Madison 698-R) (Brown rot fungus)).